We begin with the raw amino-acid sequence, 545 residues long: Light-independent protochlorophyllide reductase subunit N (545 aa).

Cys-102, Cys-127, and Cys-187 together coordinate [4Fe-4S] cluster.

The protein belongs to the BchN/ChlN family. In terms of assembly, protochlorophyllide reductase is composed of three subunits; ChlL, ChlN and ChlB. Forms a heterotetramer of two ChlB and two ChlN subunits. [4Fe-4S] cluster is required as a cofactor.

The protein resides in the plastid. Its subcellular location is the chloroplast. The enzyme catalyses chlorophyllide a + oxidized 2[4Fe-4S]-[ferredoxin] + 2 ADP + 2 phosphate = protochlorophyllide a + reduced 2[4Fe-4S]-[ferredoxin] + 2 ATP + 2 H2O. It participates in porphyrin-containing compound metabolism; chlorophyll biosynthesis (light-independent). Component of the dark-operative protochlorophyllide reductase (DPOR) that uses Mg-ATP and reduced ferredoxin to reduce ring D of protochlorophyllide (Pchlide) to form chlorophyllide a (Chlide). This reaction is light-independent. The NB-protein (ChlN-ChlB) is the catalytic component of the complex. The polypeptide is Light-independent protochlorophyllide reductase subunit N (Chlamydomonas reinhardtii (Chlamydomonas smithii)).